Consider the following 414-residue polypeptide: Putative dipeptidase TRV_05564 (414 aa).

Residues 1–20 (MAALFVSLLALTSLVPVQGA) form the signal peptide. Positions 45, 47, and 157 each coordinate Zn(2+). A disulfide bridge links Cys-96 with Cys-186. His-184 contacts substrate. Zn(2+)-binding residues include His-228 and His-249. 2 residues coordinate substrate: Arg-260 and Asp-320. N-linked (GlcNAc...) asparagine glycosylation is present at Asn-392.

This sequence belongs to the metallo-dependent hydrolases superfamily. Peptidase M19 family. It depends on Zn(2+) as a cofactor.

The enzyme catalyses an L-aminoacyl-L-amino acid + H2O = 2 an L-alpha-amino acid. Its function is as follows. Hydrolyzes a wide range of dipeptides. The polypeptide is Putative dipeptidase TRV_05564 (Trichophyton verrucosum (strain HKI 0517)).